Reading from the N-terminus, the 457-residue chain is GTPase Der (457 aa).

EngA-type G domains lie at 4–169 (PTIA…PENN) and 177–352 (IMMS…NQHR). Residues 10 to 17 (GRPNVGKS), 57 to 61 (DTGGL), 120 to 123 (NKCE), 183 to 190 (GRPNVGKS), 230 to 234 (DTAGI), and 295 to 298 (NKWD) contribute to the GTP site. The 86-residue stretch at 353–438 (RRVTTSVVNE…PLILLWRGKQ (86 aa)) folds into the KH-like domain.

Belongs to the TRAFAC class TrmE-Era-EngA-EngB-Septin-like GTPase superfamily. EngA (Der) GTPase family. In terms of assembly, associates with the 50S ribosomal subunit.

Functionally, GTPase that plays an essential role in the late steps of ribosome biogenesis. This is GTPase Der from Prochlorococcus marinus (strain AS9601).